Consider the following 706-residue polypeptide: Polyribonucleotide nucleotidyltransferase (706 aa).

Residues D485 and D491 each coordinate Mg(2+). The KH domain occupies 552 to 611 (PRMLKMKIHPDKIREVIGSGGKTINKIIEDTGVKIDIENDGTIFIAAQTQEAGELALSII). The S1 motif domain occupies 621 to 689 (GDIFKGKVIK…QQGKVSLSRK (69 aa)).

The protein belongs to the polyribonucleotide nucleotidyltransferase family. Mg(2+) serves as cofactor.

The protein localises to the cytoplasm. It catalyses the reaction RNA(n+1) + phosphate = RNA(n) + a ribonucleoside 5'-diphosphate. Functionally, involved in mRNA degradation. Catalyzes the phosphorolysis of single-stranded polyribonucleotides processively in the 3'- to 5'-direction. This chain is Polyribonucleotide nucleotidyltransferase, found in Alkaliphilus oremlandii (strain OhILAs) (Clostridium oremlandii (strain OhILAs)).